The chain runs to 795 residues: ATP-dependent RNA helicase DHX15 (795 aa).

A disordered region spans residues 1-111 (MSKRHRLDLG…HTGHTGHTSL (111 aa)). Residue Ser15 is modified to Phosphoserine. Residues 20-62 (AGTDGKDRERDRDREDRSKDRDRERDRGDREREREKEKEKELR) show a composition bias toward basic and acidic residues. Residues 79–110 (ASHSAHSTHSAHSTHSTHSAHSTHTGHTGHTS) show a composition bias toward low complexity. A Helicase ATP-binding domain is found at 147–313 (TDILVRHQSF…FDNCPLLTIP (167 aa)). Residue 160–167 (GETGSGKT) participates in ATP binding. A DEAH box motif is present at residues 260 to 263 (DEAH). A Helicase C-terminal domain is found at 338-518 (TVIQIHMCEE…SVVLQLKKLG (181 aa)). Lys488 carries the N6-acetyllysine modification. Lys786 is covalently cross-linked (Glycyl lysine isopeptide (Lys-Gly) (interchain with G-Cter in SUMO2)).

This sequence belongs to the DEAD box helicase family. DEAH subfamily. DDX15/PRP43 sub-subfamily. As to quaternary structure, component of the U11/U12 snRNPs that are part of the U12-type spliceosome. Identified in the Intron Large spliceosome complex (IL, also named intron lariat spliceosome), a post-mRNA release spliceosomal complex containing the excised intron, U2, U5 and U6 snRNPs, and splicing factors; the association may be transient. The IL complex exists in two distinct conformations, one with the DHX15 (ILS2) and one without (ILS1). Interacts with TFIP11 (via G-patch domain); indicative for a recruitment to the IL complex. Interacts with SSB/La. Interacts with GPATCH2 (via G-patch domain); promoting the RNA helicase activity. Interacts with NKRF (via G-patch domain); promoting the RNA helicase activity. Interacts with NLRP6. In terms of tissue distribution, ubiquitous.

It localises to the nucleus. Its subcellular location is the nucleolus. It carries out the reaction ATP + H2O = ADP + phosphate + H(+). Its activity is regulated as follows. ATPase activity is enhanced upon binding to G-patch domain-containing proteins. G-patch domain-containing proteins act like a brace that tethers mobile sections of DHX15 together, stabilizing a functional conformation with high RNA affinity, thereby promoting the ATPase activity. In terms of biological role, RNA helicase involved in mRNA processing and antiviral innate immunity. Pre-mRNA processing factor involved in disassembly of spliceosomes after the release of mature mRNA. In cooperation with TFIP11 seem to be involved in the transition of the U2, U5 and U6 snRNP-containing IL complex to the snRNP-free IS complex leading to efficient debranching and turnover of excised introns. Plays a key role in antiviral innate immunity by promoting both MAVS-dependent signaling and NLRP6 inflammasome. Acts as an RNA virus sensor: recognizes and binds viral double stranded RNA (dsRNA) and activates the MAVS-dependent signaling to produce interferon-beta and interferon lambda-3 (IFNL3). Involved in intestinal antiviral innate immunity together with NLRP6: recognizes and binds viral dsRNA and promotes activation of the NLRP6 inflammasome in intestinal epithelial cells to restrict infection by enteric viruses. The NLRP6 inflammasome acts by promoting maturation and secretion of IL18 in the extracellular milieu. Also involved in antibacterial innate immunity by promoting Wnt-induced antimicrobial protein expression in Paneth cells. The sequence is that of ATP-dependent RNA helicase DHX15 from Mus musculus (Mouse).